The sequence spans 116 residues: Toxin CSTX-10 (116 aa).

The signal sequence occupies residues 1–20 (MKVLVIFAVLSLVIFSNCSA). A propeptide spanning residues 21-47 (ETDEDFFGEESFEADDIIPFIAKEQVR) is cleaved from the precursor. 4 disulfides stabilise this stretch: C53–C68, C60–C77, C67–C94, and C79–C92.

In terms of tissue distribution, expressed by the venom gland.

It localises to the secreted. It is found in the target cell membrane. Its function is as follows. Spider venom toxin that shows calcium channel blocking activity and exhibits cytolytic activity by affecting the outer leaflet curvature and/or pore formation across the membrane. It blocks L-type calcium channels (Cav1/CACNA1) in mammalian neurons at nanomolar concentrations. Furthermore, it produces a slow voltage-independent block of mid/low and high voltage-activated calcium channels in cockroach neurons. Potassium ions, histamine, M-ctenitoxin-Cs1a (AC P83619), CSTX-9 (AC P58604), and CSTX-13 (AC P83919) synergistically increase the insecticidal activity of this toxin. In vivo, it causes paralysis in blow flies and provokes death in drosophila. The polypeptide is Toxin CSTX-10 (Cupiennius salei (American wandering spider)).